The primary structure comprises 330 residues: Methionyl-tRNA formyltransferase (330 aa).

121-124 (SLLP) contributes to the (6S)-5,6,7,8-tetrahydrofolate binding site.

It belongs to the Fmt family.

It catalyses the reaction L-methionyl-tRNA(fMet) + (6R)-10-formyltetrahydrofolate = N-formyl-L-methionyl-tRNA(fMet) + (6S)-5,6,7,8-tetrahydrofolate + H(+). Functionally, attaches a formyl group to the free amino group of methionyl-tRNA(fMet). The formyl group appears to play a dual role in the initiator identity of N-formylmethionyl-tRNA by promoting its recognition by IF2 and preventing the misappropriation of this tRNA by the elongation apparatus. This Burkholderia orbicola (strain MC0-3) protein is Methionyl-tRNA formyltransferase.